The primary structure comprises 195 residues: Putative inactive carbonic anhydrase 5B-like protein (195 aa).

121 to 122 is a substrate binding site; the sequence is TT.

It belongs to the alpha-carbonic anhydrase family.

The protein is Putative inactive carbonic anhydrase 5B-like protein (CA5BP1) of Homo sapiens (Human).